Consider the following 232-residue polypeptide: MDLPIEDSHDSSTSPKGKQPTTAEKSATKKEDKVPVKKQKTRTVFSSTQLCVLNDRFQRQKYLSLQQMQELSNILNLSYKQVKTWFQNQRMKSKRWQKNNWLKNSNGVTQGCLVNPTGNLPMWSNQTWNNSIWSNETQNIQSWSNHSWNTQTWCTQSWNNQAWNSPFYNCGEESLQSCMQFQPNSPASDLEAALEAAGEGLNVIQQTARYFSTPQTMDLFLNYSTNMQPEDV.

Over residues 1 to 10 (MDLPIEDSHD) the composition is skewed to basic and acidic residues. Residues 1–39 (MDLPIEDSHDSSTSPKGKQPTTAEKSATKKEDKVPVKKQ) are disordered. Residues 11–25 (SSTSPKGKQPTTAEK) are compositionally biased toward polar residues. Residues 26-35 (SATKKEDKVP) show a composition bias toward basic and acidic residues. 8 tandem repeats follow at residues 123–127 (WSNQT), 128–132 (WNNSI), 133–137 (WSNET), 143–147 (WSNHS), 148–152 (WNTQT), 153–157 (WCTQS), 158–162 (WNNQA), and 163–167 (WNSPF). The tract at residues 123 to 167 (WSNQTWNNSIWSNETQNIQSWSNHSWNTQTWCTQSWNNQAWNSPF) is 8 X repeats starting with a Trp in each unit. Residues 123 to 167 (WSNQTWNNSIWSNETQNIQSWSNHSWNTQTWCTQSWNNQAWNSPF) form a sufficient for transactivation activity region. The tract at residues 168–232 (YNCGEESLQS…YSTNMQPEDV (65 aa)) is sufficient for strong transactivation activity.

The protein belongs to the Nanog homeobox family.

It is found in the nucleus. Its function is as follows. Probable transcriptional regulator. The protein is Putative homeobox protein NANOG2 (NANOGP1) of Pan troglodytes (Chimpanzee).